We begin with the raw amino-acid sequence, 458 residues long: Protein adenylyltransferase FICD (458 aa).

The Cytoplasmic portion of the chain corresponds to 1–23 (MILMPMASVVAVAEPKWVSVWGR). Residues 24–44 (FLWMALLSMALGSLLALLLPL) form a helical; Signal-anchor for type II membrane protein membrane-spanning segment. The Lumenal portion of the chain corresponds to 45-458 (GVVEEHCLAV…GFKETLPVRP (414 aa)). Thr80 carries the post-translational modification O-AMP-threonine; by autocatalysis. TPR repeat units lie at residues 106–139 (AKAA…DPGF) and 140–173 (VDAL…SPFH). Thr183 carries the O-AMP-threonine; by autocatalysis modification. The Inhibitory (S/T)XXXE(G/N) motif signature appears at 230-235 (TVAIEG). Glu234 contacts ATP. N-linked (GlcNAc...) asparagine glycosylation occurs at Asn275. The 136-residue stretch at 285-420 (VTMDDMLEIH…VRPFIRFIAK (136 aa)) folds into the Fido domain. Residue 316-319 (VGHH) participates in ATP binding. His363 is a catalytic residue. Residues 367–374 (DGNGRTSR), 399–400 (YY), and Asn407 contribute to the ATP site.

This sequence belongs to the fic family. As to quaternary structure, homodimer. Interacts with HD. Mg(2+) serves as cofactor. Mn(2+) is required as a cofactor. Post-translationally, auto-AMPylated in vitro.

Its subcellular location is the endoplasmic reticulum membrane. The enzyme catalyses L-tyrosyl-[protein] + ATP = O-(5'-adenylyl)-L-tyrosyl-[protein] + diphosphate. It carries out the reaction 3-O-(5'-adenylyl)-L-threonyl-[protein] + H2O = L-threonyl-[protein] + AMP + H(+). The catalysed reaction is L-threonyl-[protein] + ATP = 3-O-(5'-adenylyl)-L-threonyl-[protein] + diphosphate. With respect to regulation, the side chain of Glu-234 determines which of the two opposing activities (AMPylase or de-AMPylase) will take place. In response to endoplasmic reticulum stress, mediates de-AMPylase activity. Adenylyltransferase activity is inhibited by the inhibitory helix present at the N-terminus: Glu-234 binds ATP and competes with ATP-binding at Arg-374, thereby preventing adenylyltransferase activity. In unstressed cells, disengagement of Glu-234 promotes adenylyltransferase activity. Activation dissociates ATP-binding from Glu-234, allowing ordered binding of the entire ATP moiety with the alpha-phosphate in an orientation that is productive for accepting an incoming target hydroxyl side chain. Protein that can both mediate the addition of adenosine 5'-monophosphate (AMP) to specific residues of target proteins (AMPylation), and the removal of the same modification from target proteins (de-AMPylation), depending on the context. The side chain of Glu-231 determines which of the two opposing activities (AMPylase or de-AMPylase) will take place. Acts as a key regulator of the ERN1/IRE1-mediated unfolded protein response (UPR) by mediating AMPylation or de-AMPylation of HSPA5/BiP. In unstressed cells, acts as an adenylyltransferase by mediating AMPylation of HSPA5/BiP at 'Thr-518', thereby inactivating it. In response to endoplasmic reticulum stress, acts as a phosphodiesterase by mediating removal of ATP (de-AMPylation) from HSPA5/BiP at 'Thr-518', leading to restore HSPA5/BiP activity. Although it is able to AMPylate RhoA, Rac and Cdc42 Rho GTPases in vitro, Rho GTPases do not constitute physiological substrates. The protein is Protein adenylyltransferase FICD of Mus musculus (Mouse).